Consider the following 321-residue polypeptide: MNKYQTHLLEHSVVKILSGTGKKHIALVAGGMSAEREVSLISSVGVSKALIELGYKVTFIDMGADIAVKLQEINPDIVFNCLHGTYGEDGCLPGLLNIMRIPYTHSGVLSSALAFDKIHSRSCFLKNNINMADSIVVSKSDHINTDPMKRPYVIKPLKQGSSIGVEVIFEEDDFHFIDYDFPYGEDIIIEQYIQGQELQVALLNGKALGVLEIKLLKNRFYDYETKYNKGFAKHVCPAQLPANLYKKLLIESEKIYKTINCKGPVRAEFILEEQTNKLYVLEINTHPGMTPLSIVPEIAAYAGISFTNLIEEIIKMASFES.

The region spanning 121–315 is the ATP-grasp domain; the sequence is RSCFLKNNIN…FTNLIEEIIK (195 aa). Position 148–199 (148–199) interacts with ATP; that stretch reads MKRPYVIKPLKQGSSIGVEVIFEEDDFHFIDYDFPYGEDIIIEQYIQGQELQ. Glutamate 268, glutamate 282, and asparagine 284 together coordinate Mg(2+).

Belongs to the D-alanine--D-alanine ligase family. Mg(2+) is required as a cofactor. Mn(2+) serves as cofactor.

It localises to the cytoplasm. It carries out the reaction 2 D-alanine + ATP = D-alanyl-D-alanine + ADP + phosphate + H(+). Its pathway is cell wall biogenesis; peptidoglycan biosynthesis. Functionally, cell wall formation. This Rickettsia typhi (strain ATCC VR-144 / Wilmington) protein is D-alanine--D-alanine ligase.